The primary structure comprises 401 residues: Probable 2,3-bisphosphoglycerate-independent phosphoglycerate mutase (401 aa).

The protein belongs to the BPG-independent phosphoglycerate mutase family. A-PGAM subfamily.

The enzyme catalyses (2R)-2-phosphoglycerate = (2R)-3-phosphoglycerate. It participates in carbohydrate degradation; glycolysis; pyruvate from D-glyceraldehyde 3-phosphate: step 3/5. Its function is as follows. Catalyzes the interconversion of 2-phosphoglycerate and 3-phosphoglycerate. The polypeptide is Probable 2,3-bisphosphoglycerate-independent phosphoglycerate mutase (Thermotoga maritima (strain ATCC 43589 / DSM 3109 / JCM 10099 / NBRC 100826 / MSB8)).